We begin with the raw amino-acid sequence, 1026 residues long: UPF0182 protein FRAAL6027 (1026 aa).

A run of 7 helical transmembrane segments spans residues 13 to 33 (AKVIVPVLLAVALVIAFVAIF), 60 to 80 (ILLFLIFGAVMAVVIGTNIVL), 108 to 128 (YMKLVLVAVAAVFGLAAGLSA), 167 to 187 (FLLGFLLTAVLLSLLVTVLTH), 208 to 228 (AHISVLLGLLALLKAWAYYLD), 250 to 270 (AVLPAKLILLFISLACAVLFI), and 283 to 303 (LGAGILVLSSVVIGGIYPAFI). Residues 877–888 (AAAGAGTGATTT) are compositionally biased toward low complexity. Disordered stretches follow at residues 877–916 (AAAGAGTGATTTTGGGGQATTQGGGTGAAPPGGTSGLQDA) and 958–1026 (LASP…PPPG). Residues 889–903 (TGGGGQATTQGGGTG) are compositionally biased toward gly residues. Residues 970-1001 (PTPSRSAAPTTRGTAAGSAPPGTTPAVAAPAG) show a composition bias toward low complexity. The segment covering 1016–1026 (PQQPRAAPPPG) has biased composition (pro residues).

Belongs to the UPF0182 family.

It is found in the cell membrane. The chain is UPF0182 protein FRAAL6027 from Frankia alni (strain DSM 45986 / CECT 9034 / ACN14a).